Consider the following 271-residue polypeptide: NAD kinase (271 aa).

D52 acts as the Proton acceptor in catalysis. Residues 52-53 (DG), 129-130 (NE), R155, D157, and A192 each bind NAD(+).

It belongs to the NAD kinase family. It depends on a divalent metal cation as a cofactor.

Its subcellular location is the cytoplasm. It catalyses the reaction NAD(+) + ATP = ADP + NADP(+) + H(+). Its function is as follows. Involved in the regulation of the intracellular balance of NAD and NADP, and is a key enzyme in the biosynthesis of NADP. Catalyzes specifically the phosphorylation on 2'-hydroxyl of the adenosine moiety of NAD to yield NADP. The chain is NAD kinase from Geobacillus stearothermophilus (Bacillus stearothermophilus).